We begin with the raw amino-acid sequence, 481 residues long: MTQYTLKQAGSLLQSKQISAVELASAYLAAIAEKNPALNGYITIDQDKTLAEARAADERIAQGNASALTGVPVAYKDIFCQTGWRSACASKMLDNFIFPYTATVVQNLLDEGMVTLGRTNMDEFAMGSTNENSFYGAAKNPWNPEHVPGGSSGGSAAVVAARLAPAALGSDTGGSIRQPASHCGITGIKPTYGTVSRFGMVAYASSFDQAGPMAQTAEDCAILLNAMAGFDPKDSTSFEREKEDYTRDLDKPLKGVKIGLPKEYFSEGNSTDVQTALQNTIDLLKAQGAELVEVSLPQTKLSIPAYYVLASAEAGTNLSRYDGVRYGHRAAQFGDLEEMYGKTRAEGFGSEVKRRIMIGTYVLSHGYYDAYYLKAQKLRRLVADDFQTAFARCDLILAPTAPSAAPKIGADTSPVETYLSDIYTIAVNLAGLPALTLPAGFSGGGLPVGVQLVGNYFAEAKILGAAHQIQLNSDWHGKRPE.

Active-site charge relay system residues include Lys-76 and Ser-151. The active-site Acyl-ester intermediate is Ser-175.

Belongs to the amidase family. GatA subfamily. In terms of assembly, heterotrimer of A, B and C subunits.

The enzyme catalyses L-glutamyl-tRNA(Gln) + L-glutamine + ATP + H2O = L-glutaminyl-tRNA(Gln) + L-glutamate + ADP + phosphate + H(+). Functionally, allows the formation of correctly charged Gln-tRNA(Gln) through the transamidation of misacylated Glu-tRNA(Gln) in organisms which lack glutaminyl-tRNA synthetase. The reaction takes place in the presence of glutamine and ATP through an activated gamma-phospho-Glu-tRNA(Gln). The sequence is that of Glutamyl-tRNA(Gln) amidotransferase subunit A from Neisseria gonorrhoeae (strain ATCC 700825 / FA 1090).